Here is a 34-residue protein sequence, read N- to C-terminus: DCLGWFKGCDPDNDKCCEGYKCNRRDKWCKYKLW.

3 disulfide bridges follow: Cys2–Cys17, Cys9–Cys22, and Cys16–Cys29.

This sequence belongs to the neurotoxin 10 (Hwtx-1) family. 61 (VSTX3) subfamily. As to expression, expressed by the venom gland.

The protein resides in the secreted. Its function is as follows. Potent voltage-gated sodium channel blocker (IC(50)=190 nM and 210 nM on human and rat Nav1.3/SCN3A respectively, 430 nM on human Nav1.7/SCN9A, 770 nM and 290 nM on human and rat Nav1.8/SCN10A, respectively). Binds the voltage-sensor domain of the potassium channel KvAP (from Aeropyrum pernix) and weakly inhibits this channel. The polypeptide is Voltage sensor toxin 3 (Grammostola rosea (Chilean rose tarantula)).